A 259-amino-acid chain; its full sequence is DNA repair protein RecO (259 aa).

Belongs to the RecO family.

In terms of biological role, involved in DNA repair and RecF pathway recombination. The chain is DNA repair protein RecO from Leuconostoc mesenteroides subsp. mesenteroides (strain ATCC 8293 / DSM 20343 / BCRC 11652 / CCM 1803 / JCM 6124 / NCDO 523 / NBRC 100496 / NCIMB 8023 / NCTC 12954 / NRRL B-1118 / 37Y).